Consider the following 331-residue polypeptide: NADH-quinone oxidoreductase subunit H (331 aa).

A run of 8 helical transmembrane segments spans residues 7 to 27 (ALVT…AVVI), 81 to 101 (MIFT…FAIV), 114 to 134 (IGIL…LFAG), 154 to 174 (ISYE…VGSF), 187 to 207 (VWFI…GVAV), 238 to 258 (FFVG…TLFF), 271 to 291 (WLSF…FILI), and 310 to 330 (VCLP…LAAA).

This sequence belongs to the complex I subunit 1 family. In terms of assembly, NDH-1 is composed of 13 different subunits. Subunits NuoA, H, J, K, L, M, N constitute the membrane sector of the complex.

The protein resides in the cell inner membrane. It catalyses the reaction a quinone + NADH + 5 H(+)(in) = a quinol + NAD(+) + 4 H(+)(out). Its function is as follows. NDH-1 shuttles electrons from NADH, via FMN and iron-sulfur (Fe-S) centers, to quinones in the respiratory chain. The immediate electron acceptor for the enzyme in this species is believed to be ubiquinone. Couples the redox reaction to proton translocation (for every two electrons transferred, four hydrogen ions are translocated across the cytoplasmic membrane), and thus conserves the redox energy in a proton gradient. This subunit may bind ubiquinone. The polypeptide is NADH-quinone oxidoreductase subunit H (Pseudomonas aeruginosa (strain ATCC 15692 / DSM 22644 / CIP 104116 / JCM 14847 / LMG 12228 / 1C / PRS 101 / PAO1)).